A 31-amino-acid chain; its full sequence is Cytochrome b6-f complex subunit 6 (31 aa).

The chain crosses the membrane as a helical span at residues 4 to 26 (ITSYFGFLLAASTITPALLIGLS).

Belongs to the PetL family. The 4 large subunits of the cytochrome b6-f complex are cytochrome b6, subunit IV (17 kDa polypeptide, PetD), cytochrome f and the Rieske protein, while the 4 small subunits are PetG, PetL, PetM and PetN. The complex functions as a dimer.

It is found in the plastid. The protein resides in the chloroplast thylakoid membrane. Functionally, component of the cytochrome b6-f complex, which mediates electron transfer between photosystem II (PSII) and photosystem I (PSI), cyclic electron flow around PSI, and state transitions. PetL is important for photoautotrophic growth as well as for electron transfer efficiency and stability of the cytochrome b6-f complex. This is Cytochrome b6-f complex subunit 6 from Liriodendron tulipifera (Tuliptree).